A 1827-amino-acid chain; its full sequence is Phenolphthiocerol/phthiocerol polyketide synthase subunit C (1827 aa).

A Ketosynthase family 3 (KS3) domain is found at 35-461 (CEPVAVVGIG…GTNAHVVVEQ (427 aa)). Residues cysteine 207, histidine 342, and histidine 383 each act as for beta-ketoacyl synthase activity in the active site. The segment at 566-876 (VFVYSGQGSQ…LAAVGVAASE (311 aa)) is acyltransferase. The active-site For malonyltransferase activity is serine 654. Positions 910 to 1037 (HPLLGAHIEM…AKVEQSPREC (128 aa)) are N-terminal hotdog fold. Residues 910–1076 (HPLLGAHIEM…QHHGPAFAAL (167 aa)) form a dehydratase region. A PKS/mFAS DH domain is found at 910 to 1198 (HPLLGAHIEM…LRRVERRAVP (289 aa)). The Proton acceptor; for dehydratase activity role is filled by histidine 942. The tract at residues 1050–1198 (GTTVSPADFY…LRRVERRAVP (149 aa)) is C-terminal hotdog fold. The Proton donor; for dehydratase activity role is filled by aspartate 1111. The tract at residues 1439–1617 (ASYVVTGGLG…VINWGPWSEV (179 aa)) is beta-ketoacyl reductase. 1440–1485 (SYVVTGGLGGLGLVVARWLVDRGAGRVVLGGRSDPTDEQCNVLAEL) provides a ligand contact to NADP(+). The Carrier domain maps to 1706-1785 (RAVTERMCAR…DLTADLMRQL (80 aa)). O-(pantetheine 4'-phosphoryl)serine is present on serine 1745. Residues 1807-1820 (RAAARHGAAMRRRP) are compositionally biased toward basic residues. The segment at 1807–1827 (RAAARHGAAMRRRPKPEVQGG) is disordered.

NADP(+) serves as cofactor. Pantetheine 4'-phosphate is required as a cofactor.

It catalyses the reaction icosanoyl-[(phenol)carboxyphthiodiolenone synthase] + 2 (S)-methylmalonyl-CoA + 3 malonyl-CoA + 5 NADPH + 10 H(+) = C32-carboxyphthiodiolenone-[(phenol)carboxyphthiodiolenone synthase] + 5 CO2 + 5 NADP(+) + 5 CoA + 2 H2O. The enzyme catalyses docosanoyl-[(phenol)carboxyphthiodiolenone synthase] + 2 (S)-methylmalonyl-CoA + 3 malonyl-CoA + 5 NADPH + 10 H(+) = C34-carboxyphthiodiolenone-[(phenol)carboxyphthiodiolenone synthase] + 5 CO2 + 5 NADP(+) + 5 CoA + 2 H2O. It carries out the reaction 17-(4-hydroxyphenyl)heptadecanoyl-[(phenol)carboxyphthiodiolenone synthase] + 2 (S)-methylmalonyl-CoA + 3 malonyl-CoA + 5 NADPH + 10 H(+) = C35-(phenol)carboxyphthiodiolenone-[(phenol)carboxyphthiodiolenone synthase] + 5 CO2 + 5 NADP(+) + 5 CoA + 2 H2O. The catalysed reaction is 19-(4-hydroxyphenyl)nonadecanoyl-[(phenol)carboxyphthiodiolenone synthase] + 2 (S)-methylmalonyl-CoA + 3 malonyl-CoA + 5 NADPH + 10 H(+) = C37-(phenol)carboxyphthiodiolenone-[(phenol)carboxyphthiodiolenone synthase] + 5 CO2 + 5 NADP(+) + 5 CoA + 2 H2O. It participates in lipid metabolism; fatty acid biosynthesis. In terms of biological role, part of the PpsABCDE complex involved in the biosynthesis of the lipid core common to phthiocerols and phenolphthiocerols by successive additions of malonyl-CoA or methylmalonyl-CoA extender units. PpsA can accept as substrate the activated forms of either icosanoyl (C20), docosanoyl (C22) or lignoceroyl (C24) groups from FadD26, or a (4-hydroxyphenyl)-C17 or (4-hydroxyphenyl)-C19 fatty acyl from FadD29. PpsA initiates the biosynthesis and extends its substrate using a malonyl-CoA extender unit. The PpsB and PpsC proteins add the second and third malonyl-CoA extender units. PpsD adds an (R)-methylmalonyl unit and PpsE adds a second (R)-methylmalonyl unit. The incorporation of the methylmalonyl units results in formation of two branched methyl groups in the elongated product. The sequence is that of Phenolphthiocerol/phthiocerol polyketide synthase subunit C (ppsD) from Mycobacterium tuberculosis (strain CDC 1551 / Oshkosh).